The following is an 843-amino-acid chain: Excretory canal abnormal protein 6 (843 aa).

4 disordered regions span residues 54 to 135, 568 to 601, 748 to 767, and 773 to 843; these read QLKD…EKKT, TLESSFTPPPPPPLESPTDSTSSKENESVKPAKT, TPLSRRMSAPVVRKPTMTAE, and TMKP…PKWV. Composition is skewed to pro residues over residues 66-76 and 83-103; these read TPPPPPPPPPL and APPPPPPPPPPTLKAPPPPPI. Positions 127-512 constitute an FH2 domain; sequence FLPKKEKKTK…KEEKKETQTT (386 aa). Composition is skewed to polar residues over residues 776 to 792 and 819 to 830; these read PSVSTSARPSLINTSSH and IPQSPTVTSSAR.

Belongs to the formin homology family. As to expression, expressed in the excretory cell and mostly accumulates at the tip of the excretory cell canals.

Its subcellular location is the cytoplasm. It is found in the cytoskeleton. Functionally, constitutively active protein required for microtubule and F-actin growth, structural maintenance and organization during excretory cell tubulogenesis. The sequence is that of Excretory canal abnormal protein 6 from Caenorhabditis elegans.